The following is a 498-amino-acid chain: COP9 signalosome complex subunit 1 (498 aa).

One can recognise a PCI domain in the interval 249–430 (SYLEAANSFI…HVLVSTQGDK (182 aa)).

It belongs to the CSN1 family. Component of the COP9 signalosome (CSN) complex.

The protein resides in the cytoplasm. The protein localises to the nucleus. Its function is as follows. Component of the COP9 signalosome (CSN) complex that acts as an regulator of the ubiquitin (Ubl) conjugation pathway by mediating the deneddylation of the cullin subunit of SCF-type E3 ubiquitin-protein ligase complexes. The CSN complex seems to link protein degradation to sexual development. Required for fruit body formation. The chain is COP9 signalosome complex subunit 1 (csnA) from Emericella nidulans (strain FGSC A4 / ATCC 38163 / CBS 112.46 / NRRL 194 / M139) (Aspergillus nidulans).